The following is a 334-amino-acid chain: ABC transporter L-arabinose-binding periplasmic protein (334 aa).

Residues 1 to 30 (MNRTIRRHTLRALLAALCIAPLGMQGAARA) form the signal peptide.

It belongs to the bacterial solute-binding protein 2 family. The complex is composed of two ATP-binding proteins (AraG), two transmembrane proteins (AraH) and a solute-binding protein (AraF).

It is found in the periplasm. Part of the ABC transporter complex AraFGH involved in L-arabinose import. Binds with high affinity to L-arabinose. In Azospirillum brasilense, this protein is ABC transporter L-arabinose-binding periplasmic protein (araF).